A 284-amino-acid chain; its full sequence is NAD kinase (284 aa).

Aspartate 71 (proton acceptor) is an active-site residue. NAD(+) contacts are provided by residues 71 to 72, 144 to 145, aspartate 174, 185 to 190, and glutamine 242; these read DG, ND, and TAYNLS.

It belongs to the NAD kinase family. The cofactor is a divalent metal cation.

The protein localises to the cytoplasm. The catalysed reaction is NAD(+) + ATP = ADP + NADP(+) + H(+). Its function is as follows. Involved in the regulation of the intracellular balance of NAD and NADP, and is a key enzyme in the biosynthesis of NADP. Catalyzes specifically the phosphorylation on 2'-hydroxyl of the adenosine moiety of NAD to yield NADP. The sequence is that of NAD kinase from Sulfurimonas denitrificans (strain ATCC 33889 / DSM 1251) (Thiomicrospira denitrificans (strain ATCC 33889 / DSM 1251)).